The primary structure comprises 157 residues: Cell cycle regulator of non-homologous end joining (157 aa).

Residue Met1 is modified to N-acetylmethionine. The KBM signature appears at 1 to 21 (METLKSKTKTRVLPSWMTAPV). Basic and acidic residues predominate over residues 80-91 (KPWEQRSLEATD). A disordered region spans residues 80–148 (KPWEQRSLEA…EEEKEEEDAL (69 aa)). Positions 96–106 (SPPCSSSPGSS) are enriched in low complexity. The short motif at 147 to 157 (ALKYVREIFFS) is the XLM element.

In terms of assembly, interacts (via KBM motif) with XRCC5/Ku80 and XRCC6/Ku70 heterodimer. Interacts (via XLF motif) with TRIM28/KAP1, ATM, MRE11, NBN and RAD50. Interacts with splicing factor SF3B1. Interacts with ERCC6L2; this interaction is DNA independent.

The protein localises to the cytoplasm. It is found in the nucleus. The protein resides in the chromosome. Functionally, cell-cycle-specific regulator of classical non-homologous end joining (NHEJ) of DNA double-strand break (DSB) repair, which can act both as an activator or inhibitor of NHEJ, depending on the cell cycle phase. Acts as a regulator of DNA repair pathway choice by specifically inhibiting classical NHEJ during the S and G2 phases, thereby promoting error-free repair by homologous recombination during cell cycle phases when sister chromatids are present. Preferentially protects single-stranded overhangs at break sites by inhibiting classical NHEJ, thereby creating a local environment that favors homologous recombination. Acts via interaction with XRCC5/Ku80 and XRCC6/Ku70. In contrast, acts as an activator of NHEJ during G1 phase of the cell cycle: promotes classical NHEJ in G1 phase cells via multivalent interactions that increase the affinity of DNA damage response proteins for DSB-associated chromatin. Also involved in immunoglobulin V(D)J recombination. May also act as an indirect regulator of proteasome. The sequence is that of Cell cycle regulator of non-homologous end joining from Mus musculus (Mouse).